Here is a 235-residue protein sequence, read N- to C-terminus: Large ribosomal subunit protein uL1 (235 aa).

The protein belongs to the universal ribosomal protein uL1 family. Part of the 50S ribosomal subunit.

Binds directly to 23S rRNA. The L1 stalk is quite mobile in the ribosome, and is involved in E site tRNA release. Its function is as follows. Protein L1 is also a translational repressor protein, it controls the translation of the L11 operon by binding to its mRNA. The chain is Large ribosomal subunit protein uL1 from Prochlorococcus marinus subsp. pastoris (strain CCMP1986 / NIES-2087 / MED4).